Reading from the N-terminus, the 153-residue chain is Antibacterial peptide PMAP-23 (153 aa).

The first 29 residues, 1 to 29, serve as a signal peptide directing secretion; sequence METQRASLCLGRWSLWLLLLGLVVPSASA. Position 30 is a pyrrolidone carboxylic acid (Gln30). Positions 30-130 are excised as a propeptide; sequence QALSYREAVL…DITCNQLQSV (101 aa). Residues 61–80 are disordered; sequence DQPPKADEDPGTPKPVSFTV. 2 disulfides stabilise this stretch: Cys85/Cys96 and Cys107/Cys124.

The protein belongs to the cathelicidin family.

The protein resides in the secreted. In terms of biological role, exerts antimicrobial activity against both Gram-positive and negative bacteria at concentrations of 2-16 micro molar. Its activity appears to be mediated by its ability to damage bacterial membranes. The polypeptide is Antibacterial peptide PMAP-23 (PMAP23) (Sus scrofa (Pig)).